Here is a 472-residue protein sequence, read N- to C-terminus: Putative cytochrome P450 135B1 (472 aa).

Cys388 contributes to the heme binding site. Positions 442 to 472 are disordered; it reads RDVSATSQATAQGAGCPAARGGGPSRAVGSQ. Positions 452–472 are enriched in low complexity; that stretch reads AQGAGCPAARGGGPSRAVGSQ.

This sequence belongs to the cytochrome P450 family. Heme is required as a cofactor.

This is Putative cytochrome P450 135B1 (cyp135B1) from Mycobacterium bovis (strain ATCC BAA-935 / AF2122/97).